We begin with the raw amino-acid sequence, 266 residues long: Protein SCO2 homolog, mitochondrial (266 aa).

Residues 1-41 (MLLLARPPKAWHRLFQLQPLALLGTPGGKTQHVRYQLFSTP) constitute a mitochondrion transit peptide. Residues 42 to 60 (GPADTGRQGQPQGPGLRTR) lie on the Mitochondrial matrix side of the membrane. A helical transmembrane segment spans residues 61–78 (LLVTALVGAGLGGAWLAL). The Mitochondrial intermembrane segment spans residues 79 to 266 (RAEKERGRQQ…HMAAFRSVLR (188 aa)). A Thioredoxin domain is found at 85 to 259 (GRQQQRTEAL…ITDSVRRHMA (175 aa)). Residues cysteine 133, cysteine 137, and histidine 224 each contribute to the Cu cation site. Cysteines 133 and 137 form a disulfide.

This sequence belongs to the SCO1/2 family. As to quaternary structure, homodimer. Interacts with COA6. Found in a complex with TMEM177, COX20, COA6, MT-CO2/COX2, COX18 and SCO1. Interacts with TMEM177 in a COX20-dependent manner. Interacts with COX20 in a MT-CO2/COX2- and COX18-dependent manner. Interacts with COX16.

The protein resides in the mitochondrion inner membrane. Its function is as follows. Copper metallochaperone essential for the synthesis and maturation of cytochrome c oxidase subunit II (MT-CO2/COX2) by facilitating the incorporation of copper into the Cu(A) site of MT-CO2/COX2. Could also act as a thiol-disulfide oxidoreductase to regulate the redox state of the cysteines in SCO1 during maturation of MT-CO2/COX2. The polypeptide is Protein SCO2 homolog, mitochondrial (SCO2) (Bos taurus (Bovine)).